Reading from the N-terminus, the 369-residue chain is Phenylalanine--tRNA ligase alpha subunit (369 aa).

E269 lines the Mg(2+) pocket.

It belongs to the class-II aminoacyl-tRNA synthetase family. Phe-tRNA synthetase alpha subunit type 1 subfamily. In terms of assembly, tetramer of two alpha and two beta subunits. Mg(2+) is required as a cofactor.

It localises to the cytoplasm. It catalyses the reaction tRNA(Phe) + L-phenylalanine + ATP = L-phenylalanyl-tRNA(Phe) + AMP + diphosphate + H(+). The polypeptide is Phenylalanine--tRNA ligase alpha subunit (Brucella melitensis biotype 1 (strain ATCC 23456 / CCUG 17765 / NCTC 10094 / 16M)).